A 641-amino-acid polypeptide reads, in one-letter code: Transcription termination factor MTERF2, chloroplastic (641 aa).

2 disordered regions span residues 54-80 (LKLN…DLDG) and 606-641 (FEAG…DLTE). The segment covering 610 to 641 (LDSEDSQPSDENISDQEIAFSDEAEEEEDLTE) has biased composition (acidic residues).

The protein belongs to the mTERF family.

The protein localises to the plastid. It is found in the chloroplast. In terms of biological role, transcription termination factor involved in processing of plastid transcripts. Essential for embryogenesis. The protein is Transcription termination factor MTERF2, chloroplastic of Arabidopsis thaliana (Mouse-ear cress).